Consider the following 529-residue polypeptide: Pheophorbide a oxygenase, chloroplastic (529 aa).

2 disordered regions span residues 1–24 and 46–72; these read MPVMAPTASLLLSPRPLPASRRVP and LRVAAPPSVPGEADQAPGETEPSTSSA. Residues 1–47 constitute a chloroplast transit peptide; that stretch reads MPVMAPTASLLLSPRPLPASRRVPSLPALSASGRLRLRRARADTRLR. Positions 82-194 constitute a Rieske domain; the sequence is WYPVSLVEDL…TLVSQGLLFV (113 aa). [2Fe-2S] cluster is bound by residues cysteine 124, histidine 126, cysteine 144, and histidine 147.

Requires [2Fe-2S] cluster as cofactor. In terms of tissue distribution, expressed in leaves. Expressed at low levels in roots, stems, panicles and seeds.

The protein resides in the plastid. Its subcellular location is the chloroplast. The enzyme catalyses pheophorbide a + 2 reduced [2Fe-2S]-[ferredoxin] + O2 + 2 H(+) = red chlorophyll catabolite + 2 oxidized [2Fe-2S]-[ferredoxin]. It participates in porphyrin-containing compound metabolism; chlorophyll degradation. In terms of biological role, catalyzes the key reaction of chlorophyll catabolism, porphyrin macrocycle cleavage of pheophorbide a (pheide a) to a primary fluorescent catabolite (pFCC). Works in a two-step reaction with red chlorophyll catabolite reductase (RCCR). Creates the intermediate RCC through the opening of the porphyrin macrocycle by the introduction of one atom of molecular oxygen at the alpha-methine bridge. Seems to be specific for pheide a. Belongs to the chlorophyll catabolic enzymes (CCEs). May play a role in senescence and response to wounding. The sequence is that of Pheophorbide a oxygenase, chloroplastic from Oryza sativa subsp. japonica (Rice).